Here is an 833-residue protein sequence, read N- to C-terminus: V-type proton ATPase 116 kDa subunit a 4 (833 aa).

Topologically, residues 1-390 are cytoplasmic; it reads MASVFRSEEM…DAYGVGSYRE (390 aa). Residues 391–409 form a helical membrane-spanning segment; sequence INPAPYTIITFPFLFAVMF. The Vacuolar segment spans residues 410 to 411; that stretch reads GD. Residues 412–428 traverse the membrane as a helical segment; the sequence is CGHGMVMLMAALWMVLN. Residues 429 to 443 are Cytoplasmic-facing; sequence ERHLLAQKSTNEMWN. A helical transmembrane segment spans residues 444 to 473; sequence IFFNGRYLILLMGIFSIYTGLIYNDCFSKS. Topologically, residues 474–538 are vacuolar; that stretch reads FNIFGSSWSV…ASNKLTFLNS (65 aa). A helical membrane pass occupies residues 539–558; sequence YKMKMSVILGIAHMIFGVIL. Over 559-576 the chain is Cytoplasmic; the sequence is SLFNHIYFRRTLNIILQF. Residues 577-597 traverse the membrane as a helical segment; that stretch reads IPEMIFMLSLFGYLVFMIIFK. Over 598–642 the chain is Vacuolar; the sequence is WCRYDAHTSRKAPSILIHFIGMFLFDYDDSSNAPLYGHQQEVQTF. Residues 643 to 662 form a helical membrane-spanning segment; sequence FVIIALVSVPWMLLIKPFVL. Residues 663 to 720 are Cytoplasmic-facing; the sequence is RAKHQKSQLQSFTIHEDAVEGDHSGHSSKKTAGAHGMKDGHEEEFNFGDIFVHQAIHT. A disordered region spans residues 681-700; the sequence is VEGDHSGHSSKKTAGAHGMK. The helical transmembrane segment at 721–745 threads the bilayer; sequence IEYCLGCISNTASYLRLWALSLAHA. The Vacuolar portion of the chain corresponds to 746–766; that stretch reads ELSEVLWTMVMSIGLRLQGWA. Residues 767–805 traverse the membrane as a helical segment; it reads GLVGVFIIFAVFAVLTVAILLVMEGLSAFLHALRLHWVE. Topologically, residues 806 to 833 are cytoplasmic; that stretch reads FQNKFYEGAGSKFSPFSFKHVLEGTAEE.

The protein belongs to the V-ATPase 116 kDa subunit family. As to quaternary structure, V-ATPase is a heteromultimeric enzyme made up of two complexes: the ATP-hydrolytic V1 complex and the proton translocation V0 complex. The V1 complex consists of three catalytic AB heterodimers that form a heterohexamer, three peripheral stalks each consisting of EG heterodimers, one central rotor including subunits D and F, and the regulatory subunits C and H. The proton translocation complex V0 consists of the proton transport subunit a, a ring of proteolipid subunits c9c'', rotary subunit d, subunits e and f, and the accessory subunits ATP6AP1/Ac45 and ATP6AP2/PRR. Interacts with the V1 complex V-ATPase subunit A ATP6V1A. Interacts with the V0 complex V-ATPase subunit c ATP6V0C. In terms of tissue distribution, specifically expressed in kidney, but not in the heart, brain, spleen, lung, liver, muscle, or testis. Distribution within the kidney appears more widespread than that seen in man. High intensity staining at the surface of intercalated cells, with additional expression in the proximal tubule.

The protein localises to the apical cell membrane. It localises to the basolateral cell membrane. Functionally, subunit of the V0 complex of vacuolar(H+)-ATPase (V-ATPase), a multisubunit enzyme composed of a peripheral complex (V1) that hydrolyzes ATP and a membrane integral complex (V0) that translocates protons. V-ATPase is responsible for acidifying and maintaining the pH of intracellular compartments and in some cell types, is targeted to the plasma membrane, where it is responsible for acidifying the extracellular environment. Involved in normal vectorial acid transport into the urine by the kidney. The protein is V-type proton ATPase 116 kDa subunit a 4 (Atp6v0a4) of Mus musculus (Mouse).